The following is a 476-amino-acid chain: uncharacterized protein (476 aa).

Residues 147–204 adopt a coiled-coil conformation; sequence DVRLAELRRRRAELEAEIAAVEAGDIAVLDPTAVRDRYQQLSTTARELLSDFREVEEN.

This is an uncharacterized protein from Mycolicibacterium smegmatis (strain ATCC 700084 / mc(2)155) (Mycobacterium smegmatis).